Consider the following 103-residue polypeptide: N(4)-acetylcytidine amidohydrolase (103 aa).

In terms of domain architecture, ASCH spans 6–92; that stretch reads TFFERFEQDI…VIQEIYPGLE (87 aa). Lys20 (proton acceptor) is an active-site residue. Thr23 serves as the catalytic Nucleophile. Catalysis depends on Glu73, which acts as the Proton donor.

Belongs to the N(4)-acetylcytidine amidohydrolase family.

It catalyses the reaction N(4)-acetylcytidine + H2O = cytidine + acetate + H(+). It carries out the reaction N(4)-acetyl-2'-deoxycytidine + H2O = 2'-deoxycytidine + acetate + H(+). The enzyme catalyses N(4)-acetylcytosine + H2O = cytosine + acetate + H(+). In terms of biological role, catalyzes the hydrolysis of N(4)-acetylcytidine (ac4C). This chain is N(4)-acetylcytidine amidohydrolase, found in Shewanella sp. (strain MR-4).